The primary structure comprises 460 residues: MRAWEEFLLLQEKEIGTNTVDKWLRSLKVLCFDACNLYLEAQDSFQITWFEEHIRHKVKSGLVNNNNKPIRVHVTSVDKAAPFYKEKQMQQEKTAYFTMHYGSVNPEMTFSNFLVTPENDLPFRVLQEFTKSPDENGGVTFNPIYLFGPEGSGKTHLMQSAISVLRESGGKILYVSSDLFTEHLVSAIRSGEMQKFRSFYRNIDALFIEDIEVFSGKSATQEEFFHTFNSLHSEGKLIVVSSSYAPVDLVAVEDRLISRFEWGVAIPIHPLVQEGLRSFLMRQVERLSIRIQETALDFLIYALSSNVKTLLHALNLLAKRVMYKKLSHQLLYEDDVKTLLKDVLEAAGSVRLTPLKIIRNVAQYYGVSQESILGRSQSREYVLPRQVAMYFCRQKLSLSYVRIGDVFSRDHSTVISSIRLIEQKIEENSHDIHMAIQDISKNLNSLHKSLEFFPSEEMII.

The segment at 1-68 (MRAWEEFLLL…KSGLVNNNNK (68 aa)) is domain I, interacts with DnaA modulators. Residues 68 to 102 (KPIRVHVTSVDKAAPFYKEKQMQQEKTAYFTMHYG) are domain II. A domain III, AAA+ region region spans residues 103-321 (SVNPEMTFSN…HALNLLAKRV (219 aa)). ATP-binding residues include Gly151, Gly153, Lys154, and Thr155. The domain IV, binds dsDNA stretch occupies residues 322 to 460 (MYKKLSHQLL…EFFPSEEMII (139 aa)).

This sequence belongs to the DnaA family. As to quaternary structure, oligomerizes as a right-handed, spiral filament on DNA at oriC.

It is found in the cytoplasm. Its function is as follows. Plays an essential role in the initiation and regulation of chromosomal replication. ATP-DnaA binds to the origin of replication (oriC) to initiate formation of the DNA replication initiation complex once per cell cycle. Binds the DnaA box (a 9 base pair repeat at the origin) and separates the double-stranded (ds)DNA. Forms a right-handed helical filament on oriC DNA; dsDNA binds to the exterior of the filament while single-stranded (ss)DNA is stabiized in the filament's interior. The ATP-DnaA-oriC complex binds and stabilizes one strand of the AT-rich DNA unwinding element (DUE), permitting loading of DNA polymerase. After initiation quickly degrades to an ADP-DnaA complex that is not apt for DNA replication. Binds acidic phospholipids. The chain is Chromosomal replication initiator protein DnaA 1 from Chlamydia pneumoniae (Chlamydophila pneumoniae).